A 274-amino-acid polypeptide reads, in one-letter code: Sulfur carrier protein FdhD (274 aa).

The active-site Cysteine persulfide intermediate is C121. 258–263 (FSKPGR) lines the Mo-bis(molybdopterin guanine dinucleotide) pocket.

Belongs to the FdhD family.

It is found in the cytoplasm. Functionally, required for formate dehydrogenase (FDH) activity. Acts as a sulfur carrier protein that transfers sulfur from IscS to the molybdenum cofactor prior to its insertion into FDH. The chain is Sulfur carrier protein FdhD from Yersinia pseudotuberculosis serotype O:1b (strain IP 31758).